The chain runs to 657 residues: Autophagy-related protein 22 (657 aa).

A compositionally biased stretch (low complexity) spans 1-15 (MAPNLQPQPQSQLQR). The interval 1-78 (MAPNLQPQPQ…VVPRHFGHDA (78 aa)) is disordered. At 1 to 91 (MAPNLQPQPQ…SRRELLGWYA (91 aa)) the chain is on the cytoplasmic side. Polar residues predominate over residues 26–40 (GLSNISKRSFRSCAT). The helical transmembrane segment at 92–112 (YAFAAETYVICGIASFIPILL) threads the bilayer. At 113-155 (ETLARENGVLVSDRKTPCGSSDSKNDGDGQCIVWVFGMEINTA) the chain is on the vacuolar side. The chain crosses the membrane as a helical span at residues 156 to 176 (SFAMYTFSVSVLVQALLVVSI). Residues 177 to 187 (SCAADHGNYRK) are Cytoplasmic-facing. Residues 188-208 (KLLLTFAWIGSFAVMSYIFIT) form a helical membrane-spanning segment. Over 209 to 212 (KDNY) the chain is Vacuolar. Residues 213-233 (ILGALLTVISNTSFGASFVLL) form a helical membrane-spanning segment. Over 234–317 (NSFLPLLVRY…ELELSTRISA (84 aa)) the chain is Cytoplasmic. Residues 318 to 338 (IGIGTGYIAALFLQCICIGVL) traverse the membrane as a helical segment. The Vacuolar segment spans residues 339–349 (ISLHNTTWGQR). Residue asparagine 343 is glycosylated (N-linked (GlcNAc...) asparagine). Residues 350-370 (VVLFMVGVWWTVFTIPAAMWL) traverse the membrane as a helical segment. At 371–384 (RPRPGPPLADNGRK) the chain is on the cytoplasmic side. Residues 385–405 (GIMAGLAYILYAWKSLFKTIQ) form a helical membrane-spanning segment. Residues 406–409 (QARR) lie on the Vacuolar side of the membrane. Residues 410 to 430 (LLDIVLFLAGWFLLSDAIATT) form a helical membrane-spanning segment. Residues 431–446 (SSTAILFAKTQLHMKP) are Cytoplasmic-facing. The helical transmembrane segment at 447–467 (WALGMINVISTTAGVFGAFGW) threads the bilayer. Topologically, residues 468–481 (SWVSRLFNLKAHQT) are vacuolar. The helical transmembrane segment at 482–502 (ILVCIALFELIPLYGLLGYLP) threads the bilayer. The Cytoplasmic segment spans residues 503 to 515 (FVKNWGVFGLQQP). Residues 516–536 (WEMYPLAAVYGVVLGGLSGYC) traverse the membrane as a helical segment. Topologically, residues 537–554 (RSLYGELIPPGSEAAFYA) are vacuolar. A helical membrane pass occupies residues 555 to 575 (LYAITDKGSSVFGPTIVGAII). The Cytoplasmic portion of the chain corresponds to 576–583 (DRTGTIRP). The chain crosses the membrane as a helical span at residues 584–604 (AFWFLAVLVGFPAPLIWFIDV). The Vacuolar segment spans residues 605–657 (ERGRREGAKLAKSITDSIVQEEDESDDGAERRGMLSDYEREHGQSIDDERAGR). Residues 615 to 657 (AKSITDSIVQEEDESDDGAERRGMLSDYEREHGQSIDDERAGR) are disordered. Positions 632 to 657 (GAERRGMLSDYEREHGQSIDDERAGR) are enriched in basic and acidic residues.

The protein belongs to the ATG22 family.

It is found in the vacuole membrane. Its function is as follows. Vacuolar effluxer which mediate the efflux of leucine and other amino acids resulting from autophagic degradation. The release of autophagic amino acids allows the maintenance of protein synthesis and viability during nitrogen starvation. Autophagy is required for proper vegetative growth, asexual/sexual reproduction, and full virulence. Autophagy is particularly involved in the biosynthesis of deoxynivalenol (DON), an important virulence determinant. This is Autophagy-related protein 22 from Gibberella zeae (strain ATCC MYA-4620 / CBS 123657 / FGSC 9075 / NRRL 31084 / PH-1) (Wheat head blight fungus).